Reading from the N-terminus, the 343-residue chain is Calcium/calmodulin-dependent protein kinase type 1B (343 aa).

The region spanning Tyr15 to Ile270 is the Protein kinase domain. Residues Leu21–Val29 and Lys44 each bind ATP. The active-site Proton acceptor is Asp136. Residues Lys290–Arg311 are calmodulin-binding. Residues Gly319–Trp343 form a disordered region.

This sequence belongs to the protein kinase superfamily. CAMK Ser/Thr protein kinase family. CaMK subfamily. Post-translationally, phosphorylated by CAMKK1.

Its subcellular location is the cytoplasm. The protein resides in the nucleus. The enzyme catalyses L-seryl-[protein] + ATP = O-phospho-L-seryl-[protein] + ADP + H(+). It catalyses the reaction L-threonyl-[protein] + ATP = O-phospho-L-threonyl-[protein] + ADP + H(+). Its activity is regulated as follows. Activated by Ca(2+)/calmodulin. Functionally, calcium/calmodulin-dependent protein kinase belonging to a proposed calcium-triggered signaling cascade. In vitro phosphorylates CREB1 and SYN1/synapsin I. Phosphorylates and activates CAMK1. The protein is Calcium/calmodulin-dependent protein kinase type 1B (PNCK) of Homo sapiens (Human).